A 503-amino-acid polypeptide reads, in one-letter code: Maturase K (503 aa).

The protein belongs to the intron maturase 2 family. MatK subfamily.

Its subcellular location is the plastid. It is found in the chloroplast. Usually encoded in the trnK tRNA gene intron. Probably assists in splicing its own and other chloroplast group II introns. This chain is Maturase K, found in Purshia tridentata (Antelope bitterbrush).